We begin with the raw amino-acid sequence, 318 residues long: Protein-L-histidine N-pros-methyltransferase (318 aa).

The first 18 residues, 1–18, serve as a signal peptide directing secretion; the sequence is MRLLAGWLCLSLASVWLA. N-linked (GlcNAc...) asparagine glycosylation is present at N35. Positions 174, 210, and 295 each coordinate S-adenosyl-L-homocysteine.

This sequence belongs to the METTL9 family.

It localises to the endoplasmic reticulum. Its subcellular location is the mitochondrion. The catalysed reaction is L-histidyl-[protein] + S-adenosyl-L-methionine = N(pros)-methyl-L-histidyl-[protein] + S-adenosyl-L-homocysteine + H(+). Functionally, protein-histidine N-methyltransferase that specifically catalyzes 1-methylhistidine (pros-methylhistidine) methylation of target proteins. Specifically methylates the second His of proteins with a His-x-His (HxH) motif (where 'x' is preferably a small amino acid), while exploiting the first one as a recognition signature. Catalyzes methylation of target proteins such as S100A9, NDUFB3, SLC39A5, SLC39A7, ARMC6 and DNAJB12; 1-methylhistidine modification may affect the binding of zinc and other metals to its target proteins. Constitutes the main methyltransferase for the 1-methylhistidine modification in cell. This is Protein-L-histidine N-pros-methyltransferase from Bos taurus (Bovine).